Here is a 958-residue protein sequence, read N- to C-terminus: Dermatan-sulfate epimerase (958 aa).

The signal sequence occupies residues 1 to 22 (MRTHTRGAPSVFFIYLLCFVSA). The Lumenal portion of the chain corresponds to 23–902 (YITDENPEVM…APSLSASYTR (880 aa)). N183 carries N-linked (GlcNAc...) (complex) asparagine glycosylation. H205 (proton donor) is an active-site residue. The active site involves Y261. N-linked (GlcNAc...) (high mannose) asparagine glycosylation occurs at N336. N411 carries an N-linked (GlcNAc...) (complex) asparagine glycan. Mn(2+) is bound by residues H452 and E470. Y473 is an active-site residue. N481 provides a ligand contact to Mn(2+). N-linked (GlcNAc...) (complex) asparagine glycosylation occurs at N642. Residue N648 is glycosylated (N-linked (GlcNAc...) (paucimannose) asparagine). A helical membrane pass occupies residues 903–923 (LFLILNIAIFFVMLAMQLTYF). The Cytoplasmic segment spans residues 924–933 (QRAQSLHGQR). The helical transmembrane segment at 934–954 (CLYAVLLIDSCILLWLYSSCS) threads the bilayer. Residues 955 to 958 (QSQC) are Lumenal-facing.

The protein belongs to the dermatan-sulfate isomerase family. Mn(2+) is required as a cofactor. Post-translationally, N-glycosylated. Glycosylation is important for enzymatic activity. In terms of tissue distribution, ubiquitously expressed with higher expression in kidney and ovary and lower expression in brain, colon and thymus. Also expressed in renal cell carcinomas, brain tumors, and in a part of melanomas and adenocarcinomas from organs other than the breast. Expressed in squamous cell carcinomas (SCC), glioma, and some adenocarcinoma cell lines, but not in breast cancer cell lines or any normal tissues (at protein level).

It localises to the endoplasmic reticulum membrane. It is found in the golgi apparatus membrane. Its subcellular location is the cytoplasmic vesicle membrane. The protein localises to the microsome membrane. The catalysed reaction is chondroitin 4'-sulfate = dermatan 4'-sulfate. Its pathway is glycan metabolism; chondroitin sulfate biosynthesis. The protein operates within glycan metabolism; heparan sulfate biosynthesis. In terms of biological role, converts D-glucuronic acid to L-iduronic acid (IdoUA) residues. Plays an important role in the biosynthesis of the glycosaminoglycan/mucopolysaccharide dermatan sulfate. The polypeptide is Dermatan-sulfate epimerase (DSE) (Homo sapiens (Human)).